The sequence spans 268 residues: CCAAT/enhancer-binding protein delta (268 aa).

3 disordered regions span residues 1–48 (MSAA…LGST), 97–132 (GLELLQGGPTRPPGVGSVARGPLKREPDWGDGDAPG), and 152–219 (AAQP…NQEM). Position 2 is an N-acetylserine (Ser2). Residue Lys120 forms a Glycyl lysine isopeptide (Lys-Gly) (interchain with G-Cter in SUMO) linkage. The segment covering 155–167 (PTPPTSPEPPRGS) has biased composition (pro residues). The span at 177 to 201 (VREKGAGKRGPDRGSPEYRQRRERN) shows a compositional bias: basic and acidic residues. In terms of domain architecture, bZIP spans 191–254 (SPEYRQRRER…AGLRQFFKKL (64 aa)). The basic motif stretch occupies residues 195-222 (RQRRERNNIAVRKSRDKAKRRNQEMQQK). The interval 226-254 (LSAENEKLHQRVEQLTRDLAGLRQFFKKL) is leucine-zipper.

It belongs to the bZIP family. C/EBP subfamily. As to quaternary structure, binds DNA as a homodimer and as a heterodimer. Can form stable heterodimers with CEBPA, CEBPB and CEBPE. Directly interacts with SPI1/PU.1; this interaction does not affect DNA-binding properties of each partner. Interacts with PRDM16.

Its subcellular location is the nucleus. Functionally, transcription activator that recognizes two different DNA motifs: the CCAAT homology common to many promoters and the enhanced core homology common to many enhancers. Important transcription factor regulating the expression of genes involved in immune and inflammatory responses. Transcriptional activator that enhances IL6 transcription alone and as heterodimer with CEBPB. The protein is CCAAT/enhancer-binding protein delta (Cebpd) of Mus musculus (Mouse).